The sequence spans 248 residues: Spherulin-1B (248 aa).

Positions 1–20 (MQVRNILVALVVVCFAVSEA) are cleaved as a signal peptide. Positions 61 to 207 (FDFKNSKLGV…SLNISSIQTV (147 aa)) constitute a Cupin type-1 domain. Positions 110, 112, 117, and 157 each coordinate Mn(2+). N-linked (GlcNAc...) asparagine glycosylation is present at N200.

Belongs to the germin family.

It localises to the secreted. The protein resides in the cell wall. This Physarum polycephalum (Slime mold) protein is Spherulin-1B.